A 358-amino-acid polypeptide reads, in one-letter code: MIIIFVHEAGHYLIGRWCGIKASVFSLGFGPQIVGYTDKRGTQWRLALIPLGGYVKFIGDEEGLHGTSSQSLPIVDGSFGSAHAWKKAATVFAGPLFNVLFTVVILTFFFFTYGRVAIEPVVGSFVKDSPAVQAGLQLGDRFIEMDGQQVESFEDLMNYVTFHGGDPIEFKMERSGQVFTTVITPKVVERDDGFGNRVRSGLMGVGVPVDPDNPARLDPAYVKHIRYSFGRALREASKRATFIVTQTVFFMGRLLGGKEDHCRLSGPSKTVKIAWQVSETGFLSLLNFTAFLSIGVGLINLFPIPPLDGGYLLFHVVEIITGRPISAKIREIIFRLGLCFVLLFMFFALFNDYFCWFS.

A Zn(2+)-binding site is contributed by His7. Glu8 is an active-site residue. His11 contributes to the Zn(2+) binding site. A run of 3 helical transmembrane segments spans residues 89–111 (ATVFAGPLFNVLFTVVILTFFFF), 282–304 (FLSLLNFTAFLSIGVGLINLFPI), and 332–354 (IIFRLGLCFVLLFMFFALFNDYF). In terms of domain architecture, PDZ spans 102 to 177 (TVVILTFFFF…IEFKMERSGQ (76 aa)).

The protein belongs to the peptidase M50B family. It depends on Zn(2+) as a cofactor.

It is found in the cell inner membrane. The protein is Putative zinc metalloprotease BH06270 of Bartonella henselae (strain ATCC 49882 / DSM 28221 / CCUG 30454 / Houston 1) (Rochalimaea henselae).